The primary structure comprises 599 residues: Elongation factor 4 (599 aa).

The region spanning 4 to 185 (KNIRNFSIIA…VIIKKVPSPK (182 aa)) is the tr-type G domain. GTP contacts are provided by residues 16–21 (DHGKST) and 132–135 (NKVD).

Belongs to the TRAFAC class translation factor GTPase superfamily. Classic translation factor GTPase family. LepA subfamily.

The protein resides in the cell membrane. The enzyme catalyses GTP + H2O = GDP + phosphate + H(+). Its function is as follows. Required for accurate and efficient protein synthesis under certain stress conditions. May act as a fidelity factor of the translation reaction, by catalyzing a one-codon backward translocation of tRNAs on improperly translocated ribosomes. Back-translocation proceeds from a post-translocation (POST) complex to a pre-translocation (PRE) complex, thus giving elongation factor G a second chance to translocate the tRNAs correctly. Binds to ribosomes in a GTP-dependent manner. In Mycoplasmoides gallisepticum (strain R(low / passage 15 / clone 2)) (Mycoplasma gallisepticum), this protein is Elongation factor 4.